We begin with the raw amino-acid sequence, 971 residues long: Exportin-2 (971 aa).

N-acetylmethionine is present on M1. The Importin N-terminal domain maps to 29–102; sequence AEKFLESVEG…KANIVHLMLS (74 aa). Residue S112 is modified to Phosphoserine. An N6-acetyllysine mark is found at K574 and K824. S931 carries the post-translational modification Phosphoserine.

It belongs to the XPO2/CSE1 family. Found in a complex with CSE1L/XPO2, Ran and KPNA2. Binds with high affinity to importin-alpha only in the presence of RanGTP. The complex is dissociated by the combined action of RanBP1 and RanGAP1. Interacts with CFTR.

Its subcellular location is the cytoplasm. The protein localises to the nucleus. Functionally, export receptor for importin-alpha. Mediates importin-alpha re-export from the nucleus to the cytoplasm after import substrates (cargos) have been released into the nucleoplasm. In the nucleus binds cooperatively to importin-alpha and to the GTPase Ran in its active GTP-bound form. Docking of this trimeric complex to the nuclear pore complex (NPC) is mediated through binding to nucleoporins. Upon transit of a nuclear export complex into the cytoplasm, disassembling of the complex and hydrolysis of Ran-GTP to Ran-GDP (induced by RANBP1 and RANGAP1, respectively) cause release of the importin-alpha from the export receptor. CSE1L/XPO2 then return to the nuclear compartment and mediate another round of transport. The directionality of nuclear export is thought to be conferred by an asymmetric distribution of the GTP- and GDP-bound forms of Ran between the cytoplasm and nucleus. In Pongo abelii (Sumatran orangutan), this protein is Exportin-2 (CSE1L).